Here is a 474-residue protein sequence, read N- to C-terminus: Nuclear hormone receptor family member nhr-91 (474 aa).

The segment at 50–69 (SMTPSFSQTESPNSETDDST) is disordered. A compositionally biased stretch (polar residues) spans 51-69 (MTPSFSQTESPNSETDDST). The segment at residues 97–172 (SKLCSVCGDK…KGMLTEAVRE (76 aa)) is a DNA-binding region (nuclear receptor). NR C4-type zinc fingers lie at residues 100–120 (CSVC…CEGC) and 136–155 (CSQD…CQSC). The NR LBD domain maps to 215–474 (SGKKLIKELV…KNPRRLVFDE (260 aa)).

The protein belongs to the nuclear hormone receptor family.

It localises to the nucleus. Its function is as follows. Orphan nuclear receptor. This chain is Nuclear hormone receptor family member nhr-91 (nhr-91), found in Caenorhabditis elegans.